The chain runs to 95 residues: Large ribosomal subunit protein uL23 (95 aa).

The protein belongs to the universal ribosomal protein uL23 family. In terms of assembly, part of the 50S ribosomal subunit. Contacts protein L29, and trigger factor when it is bound to the ribosome.

One of the early assembly proteins it binds 23S rRNA. One of the proteins that surrounds the polypeptide exit tunnel on the outside of the ribosome. Forms the main docking site for trigger factor binding to the ribosome. The polypeptide is Large ribosomal subunit protein uL23 (Shouchella clausii (strain KSM-K16) (Alkalihalobacillus clausii)).